The primary structure comprises 219 residues: Thiamine-phosphate synthase (219 aa).

4-amino-2-methyl-5-(diphosphooxymethyl)pyrimidine contacts are provided by residues 44 to 48 (QFREK) and Asn79. Positions 80 and 99 each coordinate Mg(2+). Ser117 is a 4-amino-2-methyl-5-(diphosphooxymethyl)pyrimidine binding site. 143–145 (TST) contributes to the 2-[(2R,5Z)-2-carboxy-4-methylthiazol-5(2H)-ylidene]ethyl phosphate binding site. Lys146 lines the 4-amino-2-methyl-5-(diphosphooxymethyl)pyrimidine pocket. 2-[(2R,5Z)-2-carboxy-4-methylthiazol-5(2H)-ylidene]ethyl phosphate is bound by residues Gly175 and 195-196 (IS).

This sequence belongs to the thiamine-phosphate synthase family. Mg(2+) serves as cofactor.

It catalyses the reaction 2-[(2R,5Z)-2-carboxy-4-methylthiazol-5(2H)-ylidene]ethyl phosphate + 4-amino-2-methyl-5-(diphosphooxymethyl)pyrimidine + 2 H(+) = thiamine phosphate + CO2 + diphosphate. It carries out the reaction 2-(2-carboxy-4-methylthiazol-5-yl)ethyl phosphate + 4-amino-2-methyl-5-(diphosphooxymethyl)pyrimidine + 2 H(+) = thiamine phosphate + CO2 + diphosphate. The catalysed reaction is 4-methyl-5-(2-phosphooxyethyl)-thiazole + 4-amino-2-methyl-5-(diphosphooxymethyl)pyrimidine + H(+) = thiamine phosphate + diphosphate. Its pathway is cofactor biosynthesis; thiamine diphosphate biosynthesis; thiamine phosphate from 4-amino-2-methyl-5-diphosphomethylpyrimidine and 4-methyl-5-(2-phosphoethyl)-thiazole: step 1/1. Its function is as follows. Condenses 4-methyl-5-(beta-hydroxyethyl)thiazole monophosphate (THZ-P) and 2-methyl-4-amino-5-hydroxymethyl pyrimidine pyrophosphate (HMP-PP) to form thiamine monophosphate (TMP). This chain is Thiamine-phosphate synthase, found in Bacillus cereus (strain ATCC 14579 / DSM 31 / CCUG 7414 / JCM 2152 / NBRC 15305 / NCIMB 9373 / NCTC 2599 / NRRL B-3711).